Consider the following 291-residue polypeptide: Prepilin leader peptidase/N-methyltransferase (291 aa).

The chain crosses the membrane as a helical span at residues 14-34 (LYFSLVFLFSLMIGSFLNVVI). Zn(2+) contacts are provided by C75, C78, C100, and C103. 6 helical membrane passes run 107–127 (ISARYPLVELLTALLSVVVAM), 131–151 (PGWGTLAALLLTWVLVALTFI), 162–182 (LTLPLLWGGLLFNLLGGYVPL), 186–206 (VIGAMAGYLVLWSLYWAFKLL), 232–252 (LPIVLLLSSLVGAIFGIGLIL), and 262–282 (IPFGPYLAIAGWIALLWGDSI).

It belongs to the peptidase A24 family. It depends on Zn(2+) as a cofactor.

It localises to the cell inner membrane. The catalysed reaction is Typically cleaves a -Gly-|-Phe- bond to release an N-terminal, basic peptide of 5-8 residues from type IV prepilin, and then N-methylates the new N-terminal amino group, the methyl donor being S-adenosyl-L-methionine.. Its function is as follows. Plays an essential role in type IV pili and type II pseudopili formation by proteolytically removing the leader sequence from substrate proteins and subsequently monomethylating the alpha-amino group of the newly exposed N-terminal phenylalanine. The sequence is that of Prepilin leader peptidase/N-methyltransferase (tapD) from Aeromonas salmonicida (strain A449).